The following is a 233-amino-acid chain: ATP-dependent Clp protease proteolytic subunit 2 (233 aa).

The Nucleophile role is filled by S116. Residue H141 is part of the active site. The segment at 214 to 233 (EGLKSIQPNGEAADDSEDDA) is disordered.

This sequence belongs to the peptidase S14 family. As to quaternary structure, fourteen ClpP subunits assemble into 2 heptameric rings which stack back to back to give a disk-like structure with a central cavity, resembling the structure of eukaryotic proteasomes.

The protein resides in the cytoplasm. It catalyses the reaction Hydrolysis of proteins to small peptides in the presence of ATP and magnesium. alpha-casein is the usual test substrate. In the absence of ATP, only oligopeptides shorter than five residues are hydrolyzed (such as succinyl-Leu-Tyr-|-NHMec, and Leu-Tyr-Leu-|-Tyr-Trp, in which cleavage of the -Tyr-|-Leu- and -Tyr-|-Trp bonds also occurs).. Its function is as follows. Cleaves peptides in various proteins in a process that requires ATP hydrolysis. Has a chymotrypsin-like activity. Plays a major role in the degradation of misfolded proteins. The polypeptide is ATP-dependent Clp protease proteolytic subunit 2 (Salinibacter ruber (strain DSM 13855 / M31)).